Here is a 351-residue protein sequence, read N- to C-terminus: Foldase protein PrsA 1 (351 aa).

Positions 1–22 (MKNSNKLIASVVTLASVMALAA) are cleaved as a signal peptide. Cys-23 carries N-palmitoyl cysteine lipidation. Cys-23 is lipidated: S-diacylglycerol cysteine. The PpiC domain occupies 145-240 (TPTMAVEMIT…KKFYIVKVTK (96 aa)). 2 stretches are compositionally biased toward low complexity: residues 303–317 (KTKA…SESS) and 326–351 (ESEQ…PAAQ). Residues 303–351 (KTKAASESSTTSESSKAAEENPSESEQTQTSSAEEPTETEAQTQEPAAQ) are disordered.

This sequence belongs to the PrsA family.

It localises to the cell membrane. It catalyses the reaction [protein]-peptidylproline (omega=180) = [protein]-peptidylproline (omega=0). Plays a major role in protein secretion by helping the post-translocational extracellular folding of several secreted proteins. The chain is Foldase protein PrsA 1 (prsA1) from Streptococcus pyogenes serotype M18 (strain MGAS8232).